The primary structure comprises 419 residues: D-amino acid dehydrogenase (419 aa).

3 to 17 provides a ligand contact to FAD; it reads VIVLGSGVIGVASAY.

This sequence belongs to the DadA oxidoreductase family. FAD is required as a cofactor.

The enzyme catalyses a D-alpha-amino acid + A + H2O = a 2-oxocarboxylate + AH2 + NH4(+). It participates in amino-acid degradation; D-alanine degradation; NH(3) and pyruvate from D-alanine: step 1/1. Its function is as follows. Oxidative deamination of D-amino acids. This chain is D-amino acid dehydrogenase, found in Acinetobacter baylyi (strain ATCC 33305 / BD413 / ADP1).